Consider the following 157-residue polypeptide: Ribosomal RNA large subunit methyltransferase H (157 aa).

S-adenosyl-L-methionine contacts are provided by residues leucine 73, glycine 105, and 124 to 129; that span reads MSKMTF.

The protein belongs to the RNA methyltransferase RlmH family. In terms of assembly, homodimer.

The protein localises to the cytoplasm. The enzyme catalyses pseudouridine(1915) in 23S rRNA + S-adenosyl-L-methionine = N(3)-methylpseudouridine(1915) in 23S rRNA + S-adenosyl-L-homocysteine + H(+). In terms of biological role, specifically methylates the pseudouridine at position 1915 (m3Psi1915) in 23S rRNA. This Bacteroides thetaiotaomicron (strain ATCC 29148 / DSM 2079 / JCM 5827 / CCUG 10774 / NCTC 10582 / VPI-5482 / E50) protein is Ribosomal RNA large subunit methyltransferase H.